Reading from the N-terminus, the 238-residue chain is Uridylate kinase (238 aa).

11-14 (KLSG) lines the ATP pocket. Gly-52 contributes to the UMP binding site. 2 residues coordinate ATP: Gly-53 and Arg-57. Residues Asp-72 and 134-141 (TGFSYFTT) each bind UMP. Residues Asn-162, Tyr-168, and Asp-171 each contribute to the ATP site.

The protein belongs to the UMP kinase family. Homohexamer.

It localises to the cytoplasm. It carries out the reaction UMP + ATP = UDP + ADP. The protein operates within pyrimidine metabolism; CTP biosynthesis via de novo pathway; UDP from UMP (UMPK route): step 1/1. Its activity is regulated as follows. Inhibited by UTP. Its function is as follows. Catalyzes the reversible phosphorylation of UMP to UDP. The protein is Uridylate kinase of Mesoplasma florum (strain ATCC 33453 / NBRC 100688 / NCTC 11704 / L1) (Acholeplasma florum).